A 250-amino-acid chain; its full sequence is Insertion sequence IS232 putative ATP-binding protein (250 aa).

G108 to T115 contacts ATP.

Belongs to the IS21/IS1162 putative ATP-binding protein family.

The sequence is that of Insertion sequence IS232 putative ATP-binding protein from Bacillus thuringiensis subsp. berliner.